An 88-amino-acid chain; its full sequence is Small ribosomal subunit protein bS20 (88 aa).

A compositionally biased stretch (basic and acidic residues) spans 1-23 (MPNTKSAEKALRVADANRQENRR). Positions 1–29 (MPNTKSAEKALRVADANRQENRRAKSQVK) are disordered.

The protein belongs to the bacterial ribosomal protein bS20 family.

Functionally, binds directly to 16S ribosomal RNA. This is Small ribosomal subunit protein bS20 from Dehalococcoides mccartyi (strain ATCC BAA-2100 / JCM 16839 / KCTC 5957 / BAV1).